Consider the following 488-residue polypeptide: Transmembrane protein 39A (488 aa).

Residues Asn-31 and Asn-39 are each glycosylated (N-linked (GlcNAc...) asparagine). 3 consecutive transmembrane segments (helical) span residues 72–92, 110–130, and 155–175; these read GLLFEFLFFIYLLVALFIQYI, TSLNFHLIDYHLAAFITVMLA, and LITARLVLLTLCGWVFCWTLV. Asn-180 is a glycosylation site (N-linked (GlcNAc...) asparagine). Helical transmembrane passes span 182–202, 287–307, 319–339, 420–440, and 446–466; these read SVLNLLFLGYPFGVYVPLCCF, EVLFNSLFSAYYVAFLPLCFV, CEHLIMVWINAFVMLSTQLLP, LLNLLLIIEGSLVLYQLYSLL, and NHTLSIALILFCNYYVLFKLL.

This sequence belongs to the TMEM39 family.

Its subcellular location is the endoplasmic reticulum membrane. Functionally, regulates autophagy by controlling the spatial distribution and levels of the intracellular phosphatidylinositol 4-phosphate (PtdIns(4)P) pools. Modulates (PtdIns(4)P) levels by regulating the ER-to-Golgi trafficking of the phosphatidylinositide phosphatase SACM1L. This chain is Transmembrane protein 39A (tmem39a), found in Xenopus tropicalis (Western clawed frog).